We begin with the raw amino-acid sequence, 391 residues long: Phosphoglycerate kinase (391 aa).

Substrate is bound by residues 19 to 21 (DYN), R35, 58 to 61 (HMGR), R117, and R150. ATP contacts are provided by residues K201, E323, and 349–352 (GGDT).

This sequence belongs to the phosphoglycerate kinase family. Monomer.

It localises to the cytoplasm. The catalysed reaction is (2R)-3-phosphoglycerate + ATP = (2R)-3-phospho-glyceroyl phosphate + ADP. It participates in carbohydrate degradation; glycolysis; pyruvate from D-glyceraldehyde 3-phosphate: step 2/5. The sequence is that of Phosphoglycerate kinase from Desulforapulum autotrophicum (strain ATCC 43914 / DSM 3382 / VKM B-1955 / HRM2) (Desulfobacterium autotrophicum).